The sequence spans 569 residues: Proline--tRNA ligase (569 aa).

The protein belongs to the class-II aminoacyl-tRNA synthetase family. ProS type 1 subfamily. As to quaternary structure, homodimer.

It is found in the cytoplasm. It carries out the reaction tRNA(Pro) + L-proline + ATP = L-prolyl-tRNA(Pro) + AMP + diphosphate. Catalyzes the attachment of proline to tRNA(Pro) in a two-step reaction: proline is first activated by ATP to form Pro-AMP and then transferred to the acceptor end of tRNA(Pro). As ProRS can inadvertently accommodate and process non-cognate amino acids such as alanine and cysteine, to avoid such errors it has two additional distinct editing activities against alanine. One activity is designated as 'pretransfer' editing and involves the tRNA(Pro)-independent hydrolysis of activated Ala-AMP. The other activity is designated 'posttransfer' editing and involves deacylation of mischarged Ala-tRNA(Pro). The misacylated Cys-tRNA(Pro) is not edited by ProRS. This Nitratiruptor sp. (strain SB155-2) protein is Proline--tRNA ligase.